We begin with the raw amino-acid sequence, 297 residues long: Probable endonuclease 4 (297 aa).

Zn(2+)-binding residues include His69, His110, Glu145, Asp179, His182, His214, Asp227, His229, and Glu259.

It belongs to the AP endonuclease 2 family. Zn(2+) is required as a cofactor.

The enzyme catalyses Endonucleolytic cleavage to 5'-phosphooligonucleotide end-products.. Endonuclease IV plays a role in DNA repair. It cleaves phosphodiester bonds at apurinic or apyrimidinic (AP) sites, generating a 3'-hydroxyl group and a 5'-terminal sugar phosphate. The protein is Probable endonuclease 4 of Bacillus velezensis (strain DSM 23117 / BGSC 10A6 / LMG 26770 / FZB42) (Bacillus amyloliquefaciens subsp. plantarum).